A 291-amino-acid chain; its full sequence is tRNA U34 carboxymethyltransferase (291 aa).

Carboxy-S-adenosyl-L-methionine contacts are provided by residues Lys-61, Trp-75, Lys-80, Gly-100, 122–124, 149–150, Tyr-169, and Arg-284; these read DPS and VE.

Belongs to the class I-like SAM-binding methyltransferase superfamily. CmoB family. As to quaternary structure, homotetramer.

It carries out the reaction carboxy-S-adenosyl-L-methionine + 5-hydroxyuridine(34) in tRNA = 5-carboxymethoxyuridine(34) in tRNA + S-adenosyl-L-homocysteine + H(+). In terms of biological role, catalyzes carboxymethyl transfer from carboxy-S-adenosyl-L-methionine (Cx-SAM) to 5-hydroxyuridine (ho5U) to form 5-carboxymethoxyuridine (cmo5U) at position 34 in tRNAs. The protein is tRNA U34 carboxymethyltransferase of Campylobacter jejuni subsp. doylei (strain ATCC BAA-1458 / RM4099 / 269.97).